Consider the following 421-residue polypeptide: Lipid II:glycine glycyltransferase (421 aa).

Belongs to the FemABX family. Monomer.

Its subcellular location is the cytoplasm. It catalyses the reaction beta-D-GlcNAc-(1-&gt;4)-Mur2Ac(oyl-L-Ala-D-isoglutaminyl-L-Lys-D-Ala-D-Ala)-di-trans,octa-cis-undecaprenyl diphosphate + glycyl-tRNA(Gly) = beta-D-GlcNAc-(1-&gt;4)-Mur2Ac(oyl-L-Ala-D-isoglutaminyl-L-Lys-(N(6)-Gly)-D-Ala-D-Ala)-di-trans,octa-cis-undecaprenyl diphosphate + tRNA(Gly) + H(+). Its function is as follows. Catalyzes the incorporation of the first glycine of the pentaglycine interpeptide bridge, which is characteristic of the S.aureus peptidoglycan. This glycine is added to the epsilon-amino group of the L-lysine of the membrane-bound lipid II intermediate (GlcNAc-(beta-1,4)-N-acetylmuramic acid(-L-Ala-D-iGln-L-Lys-D-Ala-D-Ala)-pyrophosphoryl-undecaprenol), using glycyl-tRNA(Gly) as donor, in a ribosome-independent mechanism. Involved in methicillin resistance. This chain is Lipid II:glycine glycyltransferase (femX), found in Staphylococcus aureus (strain Mu50 / ATCC 700699).